Reading from the N-terminus, the 135-residue chain is Protein NrdI (135 aa).

Belongs to the NrdI family.

In terms of biological role, probably involved in ribonucleotide reductase function. The chain is Protein NrdI from Brucella abortus (strain S19).